Consider the following 96-residue polypeptide: Large ribosomal subunit protein eL21 (96 aa).

Positions 1-66 (MPSSNGPLEG…FDGQTGTVEG (66 aa)) are disordered.

This sequence belongs to the eukaryotic ribosomal protein eL21 family. Part of the 50S ribosomal subunit. Interacts with protein L18 and binds the 5S rRNA. Has been cross-linked to L18.

Its function is as follows. This is one of 5 proteins that mediate the attachment of the 5S rRNA onto the large ribosomal subunit, stabilizing the orientation of adjacent RNA domains. In Haloarcula marismortui (strain ATCC 43049 / DSM 3752 / JCM 8966 / VKM B-1809) (Halobacterium marismortui), this protein is Large ribosomal subunit protein eL21 (rpl21e).